Here is a 47-residue protein sequence, read N- to C-terminus: MAKGKRTFQPNNRRRSRVHGFRSRMSTRAGRAIVSARRRKGRKSLTA.

Composition is skewed to basic residues over residues 1-22 (MAKG…HGFR) and 36-47 (ARRRKGRKSLTA). Residues 1-47 (MAKGKRTFQPNNRRRSRVHGFRSRMSTRAGRAIVSARRRKGRKSLTA) are disordered.

It belongs to the bacterial ribosomal protein bL34 family.

This chain is Large ribosomal subunit protein bL34, found in Corynebacterium kroppenstedtii (strain DSM 44385 / JCM 11950 / CIP 105744 / CCUG 35717).